Reading from the N-terminus, the 353-residue chain is DNA-repair protein XRCC1 (353 aa).

The segment covering 1-12 (MSQKRNLPSWMS) has biased composition (polar residues). Residues 1-57 (MSQKRNLPSWMSSRDPEITPSKSHCKKPKDEGPTEEHNSRNAPSNKSEHAEPSSNTT) form a disordered region. Residues 28 to 39 (PKDEGPTEEHNS) are compositionally biased toward basic and acidic residues. The BRCT 1 domain occupies 58-146 (EFSKLMEGVV…KLVDIEQYLM (89 aa)). The interval 150–194 (KPWRKSSSPQDANREKREHLSKKPEKQVEKKTETRGTPSTSSKNR) is disordered. The segment covering 161 to 183 (ANREKREHLSKKPEKQVEKKTET) has biased composition (basic and acidic residues). Residues 184-194 (RGTPSTSSKNR) are compositionally biased toward polar residues. Residues 240-260 (AAEGVLTCLQDAIDSLEQKQD) adopt a coiled-coil conformation. A BRCT 2 domain is found at 266–347 (ELWSFVPRVV…EEEIELAYRN (82 aa)).

Homodimer. Interacts with polynucleotide kinase (PNK), DNA polymerase-beta (POLB) and DNA ligase III (LIG3). Interacts with ZDP and ROS1. Binds to various forms of double-stranded DNA (e.g. methylated, unmethylated, with single-nucleotide gap flanked by 3'-phosphate or 5'-phosphate ends).

It is found in the nucleus. Functionally, corrects defective DNA strand-break repair and sister chromatid exchange following treatment with ionizing radiation and alkylating agents. Involved in DNA demethylation pathway by stimulating cytosine methylation (5-meC) excision, gap tailoring, and DNA ligation. The polypeptide is DNA-repair protein XRCC1 (Arabidopsis thaliana (Mouse-ear cress)).